A 365-amino-acid chain; its full sequence is Endophilin-B1 (365 aa).

At Met-1 the chain carries N-acetylmethionine. The interval 1–30 (MNIMDFNVKKLAADAGTFLSRAVQFTEEKL) is membrane-binding amphipathic helix. Residues 1–37 (MNIMDFNVKKLAADAGTFLSRAVQFTEEKLGQAEKTE) are required for membrane binding. The 235-residue stretch at 27–261 (EEKLGQAEKT…LGSFPSNYVS (235 aa)) folds into the BAR domain. Residue Thr-145 is modified to Phosphothreonine; by CDK5. Positions 156-185 (KTIAKERKLLQNKRLDLDAAKTRLKKAKAA) form a coiled coil. Residues 305–365 (SSTRKARVLY…VPITYLELLN (61 aa)) enclose the SH3 domain.

It belongs to the endophilin family. As to quaternary structure, homodimer, and heterodimer with SH3GLB2. Binds BAX; induction of apoptosis augments BAX binding. Binds DNM1, HTT, AMPH, BIN1 and ARFGAP1. Interacts with UVRAG; UVRAG bridges the interaction to BECN1 indicative for an association with the PI3K complex II (PI3KC3-C2). In terms of processing, phosphorylated at Thr-145 by CDK5; this phosphorylation is required for autophagy induction in starved neurons and facilitates homodimerization. As to expression, expressed in brain, heart, lung and spleen. Low level in liver and testis.

Its subcellular location is the cytoplasm. The protein resides in the golgi apparatus membrane. It is found in the mitochondrion outer membrane. The protein localises to the cytoplasmic vesicle. It localises to the autophagosome membrane. Its subcellular location is the midbody. May be required for normal outer mitochondrial membrane dynamics. Required for coatomer-mediated retrograde transport in certain cells. May recruit other proteins to membranes with high curvature. May promote membrane fusion. Involved in activation of caspase-dependent apoptosis by promoting BAX/BAK1 activation. Involved in caspase-independent apoptosis during nutrition starvation and involved in the regulation of autophagy. Activates lipid kinase activity of PIK3C3 during autophagy probably by associating with the PI3K complex II (PI3KC3-C2). Associated with PI3KC3-C2 during autophagy may regulate the trafficking of ATG9A from the Golgi complex to the peripheral cytoplasm for the formation of autophagosomes by inducing Golgi membrane tubulation and fragmentation. Involved in regulation of degradative endocytic trafficking and cytokinesis, probably in the context of PI3KC3-C2. The protein is Endophilin-B1 of Rattus norvegicus (Rat).